Here is a 121-residue protein sequence, read N- to C-terminus: Large ribosomal subunit protein bL12 (121 aa).

It belongs to the bacterial ribosomal protein bL12 family. In terms of assembly, homodimer. Part of the ribosomal stalk of the 50S ribosomal subunit. Forms a multimeric L10(L12)X complex, where L10 forms an elongated spine to which 2 to 4 L12 dimers bind in a sequential fashion. Binds GTP-bound translation factors.

Its function is as follows. Forms part of the ribosomal stalk which helps the ribosome interact with GTP-bound translation factors. Is thus essential for accurate translation. The polypeptide is Large ribosomal subunit protein bL12 (Shewanella baltica (strain OS223)).